An 86-amino-acid polypeptide reads, in one-letter code: Serine protease inhibitor Kazal-type 4 (86 aa).

The first 26 residues, 1 to 26 (MAVRLWVVALALAALFIVDREVPVSA), serve as a signal peptide directing secretion. Positions 31 to 86 (FSRMPICEHMTESPDCSRIYDPVCGTDGVTYESECKLCLARIENKQDIQIVKDGEC) constitute a Kazal-like domain. 3 cysteine pairs are disulfide-bonded: Cys-37-Cys-68, Cys-46-Cys-65, and Cys-54-Cys-86.

Synthesized in duodenal goblet cells and in monocytes in bone marrow and blood.

It is found in the secreted. Functionally, inhibits the glucose-induced insulin secretion from perfused pancreas; also plays a role in the immune system. Does not inhibit trypsin. The polypeptide is Serine protease inhibitor Kazal-type 4 (SPINK4) (Sus scrofa (Pig)).